We begin with the raw amino-acid sequence, 88 residues long: Metastasis-suppressor KiSS-1 (88 aa).

Residues 1 to 13 (SVENSRPTGQQLE) show a composition bias toward polar residues. Residues 1 to 88 (SVENSRPTGQ…REKDLPNYNW (88 aa)) are disordered. A compositionally biased stretch (low complexity) spans 33–55 (SATARLSRRGASLSSPAESSGSP). Positions 78-88 (QREKDLPNYNW) are enriched in basic and acidic residues. Tyrosine 86 is subject to Phosphotyrosine.

Belongs to the KISS1 family. In terms of tissue distribution, in the hypothalamus, expression increases with puberty in both male and female monkeys. Robust expression in the region of the arcuate nucleus (ARC).

The protein resides in the secreted. Its function is as follows. Metastasis suppressor protein. May regulate events downstream of cell-matrix adhesion, perhaps involving cytoskeletal reorganization. Generates a C-terminally amidated peptide, metastin which functions as the endogenous ligand of the G-protein coupled receptor GPR54. The receptor is essential for normal gonadotropin-released hormone physiology and for puberty. The hypothalamic KiSS1/GPR54 system is a pivotal factor in central regulation of the gonadotropic axis at puberty and in adulthood. The polypeptide is Metastasis-suppressor KiSS-1 (KISS1) (Macaca mulatta (Rhesus macaque)).